Consider the following 604-residue polypeptide: Glutamine--fructose-6-phosphate aminotransferase [isomerizing] (604 aa).

The active-site Nucleophile; for GATase activity is the Cys-2. One can recognise a Glutamine amidotransferase type-2 domain in the interval 2 to 218; the sequence is CGIVGVVGNR…DKELVILTKD (217 aa). SIS domains follow at residues 284–423 and 452–594; these read IITS…ANGK and VAEK…VDKP. Residue Lys-599 is the For Fru-6P isomerization activity of the active site.

In terms of assembly, homodimer.

The protein resides in the cytoplasm. The catalysed reaction is D-fructose 6-phosphate + L-glutamine = D-glucosamine 6-phosphate + L-glutamate. In terms of biological role, catalyzes the first step in hexosamine metabolism, converting fructose-6P into glucosamine-6P using glutamine as a nitrogen source. The polypeptide is Glutamine--fructose-6-phosphate aminotransferase [isomerizing] (Streptococcus pyogenes serotype M3 (strain ATCC BAA-595 / MGAS315)).